The following is a 281-amino-acid chain: Pantothenate synthetase (281 aa).

Met-30 to His-37 is a binding site for ATP. Residue His-37 is the Proton donor of the active site. Gln-61 serves as a coordination point for (R)-pantoate. Position 61 (Gln-61) interacts with beta-alanine. ATP is bound at residue Gly-149–Asp-152. Gln-155 contacts (R)-pantoate. ATP is bound by residues Ile-178 and Met-186–Arg-189.

Belongs to the pantothenate synthetase family. As to quaternary structure, homodimer.

The protein resides in the cytoplasm. The catalysed reaction is (R)-pantoate + beta-alanine + ATP = (R)-pantothenate + AMP + diphosphate + H(+). It participates in cofactor biosynthesis; (R)-pantothenate biosynthesis; (R)-pantothenate from (R)-pantoate and beta-alanine: step 1/1. In terms of biological role, catalyzes the condensation of pantoate with beta-alanine in an ATP-dependent reaction via a pantoyl-adenylate intermediate. In Shewanella baltica (strain OS185), this protein is Pantothenate synthetase.